The sequence spans 215 residues: Casparian strip membrane protein 3 (215 aa).

Residues 1 to 26 (MDSEKTGEAKITIQEPKAADPKGKGI) are disordered. Residues 1-55 (MDSEKTGEAKITIQEPKAADPKGKGIADAPPPPVVVTTAKAIQKLPRGGWKKGVA) lie on the Cytoplasmic side of the membrane. The chain crosses the membrane as a helical span at residues 56–76 (IFDFVVRLCAIATGLAATGIM). Residues 77–101 (GTTEQTLPFFTQFFQFHAEYNDLPT) are Extracellular-facing. A helical transmembrane segment spans residues 102-122 (FMFFVFANGIASGYLILSLPF). Over 123-136 (SIVCIVRPLAIVPR) the chain is Cytoplasmic. The helical transmembrane segment at 137–157 (LLLIIFDTVVMALTIAAASAA) threads the bilayer. The Extracellular portion of the chain corresponds to 158–189 (AAIVYLAHNGNSNANWNAICQQFNDFCQQTST). A helical membrane pass occupies residues 190 to 210 (AVVASFITAAMLTFLIVLSAF). The Cytoplasmic segment spans residues 211 to 215 (ALKRN).

The protein belongs to the Casparian strip membrane proteins (CASP) family. In terms of assembly, homodimer and heterodimers.

The protein localises to the cell membrane. Its function is as follows. Regulates membrane-cell wall junctions and localized cell wall deposition. Required for establishment of the Casparian strip membrane domain (CSD) and the subsequent formation of Casparian strips, a cell wall modification of the root endodermis that determines an apoplastic barrier between the intraorganismal apoplasm and the extraorganismal apoplasm and prevents lateral diffusion. The protein is Casparian strip membrane protein 3 of Ricinus communis (Castor bean).